The chain runs to 477 residues: Zinc metalloproteinase/disintegrin (477 aa).

A signal peptide spans methionine 1–serine 20. The propeptide occupies isoleucine 21 to leucine 187. The region spanning arginine 193–glutamine 389 is the Peptidase M12B domain. Glutamate 196 and aspartate 280 together coordinate Ca(2+). 3 disulfides stabilise this stretch: cysteine 304/cysteine 384, cysteine 344/cysteine 368, and cysteine 346/cysteine 351. A Zn(2+)-binding site is contributed by histidine 329. Glutamate 330 is a catalytic residue. Positions 333 and 339 each coordinate Zn(2+). Ca(2+) is bound by residues cysteine 384 and asparagine 387. A propeptide spanning residues leucine 390–phenylalanine 404 is cleaved from the precursor. The region spanning serine 396–alanine 477 is the Disintegrin domain. 6 disulfides stabilise this stretch: cysteine 410-cysteine 425, cysteine 412-cysteine 420, cysteine 419-cysteine 442, cysteine 433-cysteine 439, cysteine 438-cysteine 463, and cysteine 451-cysteine 470. The short motif at arginine 455–aspartate 457 is the Cell attachment site element.

This sequence belongs to the venom metalloproteinase (M12B) family. P-II subfamily. P-IIa sub-subfamily. As to quaternary structure, monomer. Zn(2+) serves as cofactor. As to expression, expressed by the venom gland.

The protein localises to the secreted. Inhibited by 1,10-phenanthroline and EDTA. Functionally, impairs hemostasis in the envenomed animal. Does not exhibit detectable plasminogen activating activity. Has hemagglutinating activity on red blood cells. Cleaves insulin B chain at '38-Ala-|-Leu-39' and '40-Tyr-|-Leu-41' bonds. This recombinant protein shows high inhibitory activity on collagen-induced platelet aggregation. The polypeptide is Zinc metalloproteinase/disintegrin (Bothrops jararaca (Jararaca)).